Reading from the N-terminus, the 166-residue chain is Vasopressin-neurophysin 2-copeptin (166 aa).

The first 19 residues, 1–19, serve as a signal peptide directing secretion; sequence MPDATLPACFLGLLALTSA. The cysteines at positions 20 and 25 are disulfide-linked. Glycine 28 carries the glycine amide modification. 7 cysteine pairs are disulfide-bonded: cysteine 41–cysteine 85, cysteine 44–cysteine 58, cysteine 52–cysteine 75, cysteine 59–cysteine 65, cysteine 92–cysteine 104, cysteine 98–cysteine 116, and cysteine 105–cysteine 110. An N-linked (GlcNAc...) asparagine glycan is attached at asparagine 133.

Belongs to the vasopressin/oxytocin family. In terms of assembly, interacts with vasopressin receptors V1bR/AVPR1B (Ki=85 pM), V1aR/AVPR1A (Ki=0.6 nM) and V2R/AVPR2 (Ki=4.9 nM). Interacts with oxytocin receptor (OXTR) (Ki=110 nM). In terms of processing, a shorter neurophysin molecule (32-123) is called neurophysin-I and is derived from the complete protein (called neurophysin III) by proteolytic degradation (in vivo or after extraction).

The protein localises to the secreted. Functionally, neurophysin 2 specifically binds vasopressin. Vasopressin has a direct antidiuretic action on the kidney, it also causes vasoconstriction of the peripheral vessels. Acts by binding to vasopressin receptors (V1bR/AVPR1B, V1aR/AVPR1A, and V2R/AVPR2). This is Vasopressin-neurophysin 2-copeptin (AVP) from Sus scrofa (Pig).